Consider the following 109-residue polypeptide: Nucleoid-associated protein CKO_02678 (109 aa).

The segment at 89–109 (KEKMASVSSGMQLPPGFKMPF) is disordered.

It belongs to the YbaB/EbfC family. In terms of assembly, homodimer.

The protein localises to the cytoplasm. It is found in the nucleoid. Binds to DNA and alters its conformation. May be involved in regulation of gene expression, nucleoid organization and DNA protection. The chain is Nucleoid-associated protein CKO_02678 from Citrobacter koseri (strain ATCC BAA-895 / CDC 4225-83 / SGSC4696).